A 92-amino-acid polypeptide reads, in one-letter code: MARTVNCVYLNKEADGLDFQLYPGDLGKRIFDNISKEAWGLWQKKQTMLINEKKLNMMNVDDRKFLEEQMTSFLFEGKEVEIEGFVPEKDQD.

Belongs to the Fe(2+)-trafficking protein family.

Could be a mediator in iron transactions between iron acquisition and iron-requiring processes, such as synthesis and/or repair of Fe-S clusters in biosynthetic enzymes. The chain is Probable Fe(2+)-trafficking protein from Shewanella baltica (strain OS223).